The following is a 117-amino-acid chain: Large ribosomal subunit protein uL18 (117 aa).

It belongs to the universal ribosomal protein uL18 family. Part of the 50S ribosomal subunit; part of the 5S rRNA/L5/L18/L25 subcomplex. Contacts the 5S and 23S rRNAs.

Functionally, this is one of the proteins that bind and probably mediate the attachment of the 5S RNA into the large ribosomal subunit, where it forms part of the central protuberance. This is Large ribosomal subunit protein uL18 from Blochmanniella floridana.